The following is a 563-amino-acid chain: 3-oxosteroid 1-dehydrogenase (563 aa).

7-36 (DVVVVGSGAAGMVAALVAAHRGLSTVVVEK) serves as a coordination point for FAD.

It belongs to the FAD-dependent oxidoreductase 2 family. 3-oxosteroid dehydrogenase subfamily. FAD is required as a cofactor.

It carries out the reaction a 3-oxosteroid + A = a 3-oxo-Delta(1)-steroid + AH2. The enzyme catalyses a 3-oxo-Delta(4)-steroid + A = a 3-oxo-Delta(1,4)-steroid + AH2. The catalysed reaction is 3-oxochol-4-en-22-oyl-CoA + NAD(+) = 3-oxochola-1,4-dien-22-oyl-CoA + NADH + H(+). Functionally, involved in the degradation of cholesterol. Catalyzes the elimination of the C-1 and C-2 hydrogen atoms of the A-ring from the polycyclic ring structure of 3-ketosteroids. Has a clear preference for 3-ketosteroids with a saturated A-ring, displaying highest activity on 5alpha-AD (5alpha-androstane-3,17-dione) and 5alpha-T (5alpha-testosterone, also known as 17beta-hydroxy-5alpha-androstane-3-one). Is also involved in the formation of 3-keto-1,4-diene-steroid from 3-keto-4-ene-steroid. Catalyzes the conversion of 3-oxo-23,24-bisnorchol-4-en-22-oyl-coenzyme A thioester (4-BNC-CoA) to 3-oxo-23,24-bisnorchola-1,4-dien-22-oyl-coenzyme A thioester (1,4-BNC-CoA). The protein is 3-oxosteroid 1-dehydrogenase (kstD) of Mycobacterium tuberculosis (strain ATCC 25618 / H37Rv).